The sequence spans 518 residues: PTS system mannitol-specific EIICB component (518 aa).

Over 1-31 (MDTMSNSQQNKGIGRKVQAFGSFLSSMIMPN) the chain is Cytoplasmic. Residues 20–352 (FGSFLSSMIM…LKFTKDPKQD (333 aa)) form the PTS EIIC type-2 domain. A helical transmembrane segment spans residues 32–53 (IGAFIAWGFIAAIFIDNGWFPN). Topologically, residues 54–57 (KDLA) are extracellular. A helical membrane pass occupies residues 58–78 (QLAGPMITYLIPLLIAFSGGR). The Cytoplasmic segment spans residues 79 to 142 (LIHDLRGGII…QGFEMLFNNF (64 aa)). Residues 143–164 (SAGILGFIMTIFGFEVLAPIMK) traverse the membrane as a helical segment. Over 165-173 (FIMHILSVG) the chain is Extracellular. Residues 174 to 194 (VEALVHAHLLPLVSILVEPAK) traverse the membrane as a helical segment. Residues 195 to 281 (IVFLNNAINH…VLMRPLLFVS (87 aa)) are Cytoplasmic-facing. Residues 282 to 301 (VILGGMTGVATYSLLDFGFK) traverse the membrane as a helical segment. Over 302–321 (TPASPGSIIVYAINAPKGEF) the chain is Extracellular. Residues 322 to 343 (LHMLTGVVLAALVSFVVSALIL) form a helical membrane-spanning segment. The Cytoplasmic portion of the chain corresponds to 344 to 518 (KFTKDPKQDL…LINNLKEDQD (175 aa)). Positions 369–406 (SVASKLSAKDDNKAADNKTAETTTATAASNKAEDKDSD) are disordered. Positions 375 to 387 (SAKDDNKAADNKT) are enriched in basic and acidic residues. Low complexity predominate over residues 388 to 398 (AETTTATAASN). Positions 426 to 518 (DHVIFACDAG…LINNLKEDQD (93 aa)) constitute a PTS EIIB type-2 domain. The active-site Phosphocysteine intermediate is C432. C432 carries the post-translational modification Phosphocysteine; by EIIA.

As to quaternary structure, homodimer.

The protein localises to the cell membrane. It carries out the reaction D-mannitol(out) + N(pros)-phospho-L-histidyl-[protein] = D-mannitol 1-phosphate(in) + L-histidyl-[protein]. In terms of biological role, the phosphoenolpyruvate-dependent sugar phosphotransferase system (sugar PTS), a major carbohydrate active transport system, catalyzes the phosphorylation of incoming sugar substrates concomitantly with their translocation across the cell membrane. The enzyme II CmtAB PTS system is involved in D-mannitol transport. In Staphylococcus carnosus, this protein is PTS system mannitol-specific EIICB component.